We begin with the raw amino-acid sequence, 943 residues long: Isoleucine--tRNA ligase (943 aa).

The short motif at 59 to 69 (PYANGQIHLGH) is the 'HIGH' region element. L-isoleucyl-5'-AMP is bound at residue E577. Residues 618–622 (KMSKS) carry the 'KMSKS' region motif. An ATP-binding site is contributed by K621. Zn(2+) contacts are provided by C906, C909, C926, and C929.

It belongs to the class-I aminoacyl-tRNA synthetase family. IleS type 1 subfamily. Monomer. The cofactor is Zn(2+).

It is found in the cytoplasm. It catalyses the reaction tRNA(Ile) + L-isoleucine + ATP = L-isoleucyl-tRNA(Ile) + AMP + diphosphate. Functionally, catalyzes the attachment of isoleucine to tRNA(Ile). As IleRS can inadvertently accommodate and process structurally similar amino acids such as valine, to avoid such errors it has two additional distinct tRNA(Ile)-dependent editing activities. One activity is designated as 'pretransfer' editing and involves the hydrolysis of activated Val-AMP. The other activity is designated 'posttransfer' editing and involves deacylation of mischarged Val-tRNA(Ile). The chain is Isoleucine--tRNA ligase from Xanthomonas axonopodis pv. citri (strain 306).